Reading from the N-terminus, the 228-residue chain is UPF0173 metal-dependent hydrolase Lm4b_01588 (228 aa).

Belongs to the UPF0173 family.

The protein is UPF0173 metal-dependent hydrolase Lm4b_01588 of Listeria monocytogenes serotype 4b (strain CLIP80459).